Consider the following 302-residue polypeptide: uncharacterized protein (302 aa).

The next 7 helical transmembrane spans lie at 25 to 45 (SFIF…LQIF), 58 to 78 (FSYL…VIAL), 104 to 124 (IQVG…WMFL), 158 to 178 (YGLL…ATVL), 182 to 202 (FAWA…QYVP), 215 to 235 (ALSI…GYLL), and 247 to 267 (MMYI…MFYL). In terms of domain architecture, PQ-loop spans 175 to 245 (ATVLSSNFAW…SRLPGTNWTT (71 aa)).

The protein localises to the membrane. This is an uncharacterized protein from Schizosaccharomyces pombe (strain 972 / ATCC 24843) (Fission yeast).